The primary structure comprises 78 residues: Acyl carrier protein (78 aa).

One can recognise a Carrier domain in the interval 2–77 (SDTVERVKKI…DAVKFIDKAS (76 aa)). Ser37 bears the O-(pantetheine 4'-phosphoryl)serine mark.

It belongs to the acyl carrier protein (ACP) family. 4'-phosphopantetheine is transferred from CoA to a specific serine of apo-ACP by AcpS. This modification is essential for activity because fatty acids are bound in thioester linkage to the sulfhydryl of the prosthetic group.

It is found in the cytoplasm. It functions in the pathway lipid metabolism; fatty acid biosynthesis. Carrier of the growing fatty acid chain in fatty acid biosynthesis. This is Acyl carrier protein from Bartonella henselae (strain ATCC 49882 / DSM 28221 / CCUG 30454 / Houston 1) (Rochalimaea henselae).